The sequence spans 53 residues: UPF0391 membrane protein YPTS_0599 (53 aa).

2 consecutive transmembrane segments (helical) span residues 4–24 and 27–47; these read WGIIFLIIALIAAALGFGGLA and AAWAAKVVFVVGIILFLISLF.

Belongs to the UPF0391 family.

It localises to the cell membrane. The polypeptide is UPF0391 membrane protein YPTS_0599 (Yersinia pseudotuberculosis serotype IB (strain PB1/+)).